Reading from the N-terminus, the 299-residue chain is Bifunctional protein FolD 1 (299 aa).

Residues 168–170, Ser-193, and Ile-234 contribute to the NADP(+) site; that span reads GRS.

This sequence belongs to the tetrahydrofolate dehydrogenase/cyclohydrolase family. Homodimer.

It catalyses the reaction (6R)-5,10-methylene-5,6,7,8-tetrahydrofolate + NADP(+) = (6R)-5,10-methenyltetrahydrofolate + NADPH. It carries out the reaction (6R)-5,10-methenyltetrahydrofolate + H2O = (6R)-10-formyltetrahydrofolate + H(+). It functions in the pathway one-carbon metabolism; tetrahydrofolate interconversion. Its function is as follows. Catalyzes the oxidation of 5,10-methylenetetrahydrofolate to 5,10-methenyltetrahydrofolate and then the hydrolysis of 5,10-methenyltetrahydrofolate to 10-formyltetrahydrofolate. This Rhizobium etli (strain ATCC 51251 / DSM 11541 / JCM 21823 / NBRC 15573 / CFN 42) protein is Bifunctional protein FolD 1.